Here is a 963-residue protein sequence, read N- to C-terminus: Pyruvate, phosphate dikinase 1, chloroplastic (963 aa).

The N-terminal 76 residues, 1–76, are a transit peptide targeting the chloroplast; it reads MLYIRKKMTS…GLHRETKARA (76 aa). At T543 the chain carries Phosphothreonine; by PDRP1. The active-site Tele-phosphohistidine intermediate is H545. Substrate contacts are provided by R651, R707, E836, G857, T858, N859, and D860. E836 contributes to the Mg(2+) binding site. D860 is a Mg(2+) binding site. The Proton donor role is filled by C922.

Belongs to the PEP-utilizing enzyme family. As to quaternary structure, homotetramer. Interacts with RP1 and RP2. It depends on Mg(2+) as a cofactor. In terms of processing, phosphorylation of Thr-543 in the dark inactivates the enzyme. Dephosphorylation upon light stimulation reactivates the enzyme. Isoform 1 is expressed in leaves, flowers and siliques. Isoform 2 is found in cotyledons, rosette and cauline leaves, petioles, flowers and siliques.

It is found in the plastid. The protein resides in the chloroplast. The protein localises to the cytoplasm. It catalyses the reaction pyruvate + phosphate + ATP = phosphoenolpyruvate + AMP + diphosphate + H(+). Its activity is regulated as follows. Activated by light-induced dephosphorylation. Inhibited by dark-induced phosphorylation. Both reactions are catalyzed by PDRP1. Formation of phosphoenolpyruvate. May be involved in regulating the flux of carbon into starch and fatty acids of seeds and in the remobilization of nitrogen reserves in senescing leaves. The protein is Pyruvate, phosphate dikinase 1, chloroplastic (PPDK) of Arabidopsis thaliana (Mouse-ear cress).